A 95-amino-acid polypeptide reads, in one-letter code: Aspartyl/glutamyl-tRNA(Asn/Gln) amidotransferase subunit C (95 aa).

The protein belongs to the GatC family. Heterotrimer of A, B and C subunits.

It catalyses the reaction L-glutamyl-tRNA(Gln) + L-glutamine + ATP + H2O = L-glutaminyl-tRNA(Gln) + L-glutamate + ADP + phosphate + H(+). It carries out the reaction L-aspartyl-tRNA(Asn) + L-glutamine + ATP + H2O = L-asparaginyl-tRNA(Asn) + L-glutamate + ADP + phosphate + 2 H(+). Functionally, allows the formation of correctly charged Asn-tRNA(Asn) or Gln-tRNA(Gln) through the transamidation of misacylated Asp-tRNA(Asn) or Glu-tRNA(Gln) in organisms which lack either or both of asparaginyl-tRNA or glutaminyl-tRNA synthetases. The reaction takes place in the presence of glutamine and ATP through an activated phospho-Asp-tRNA(Asn) or phospho-Glu-tRNA(Gln). The polypeptide is Aspartyl/glutamyl-tRNA(Asn/Gln) amidotransferase subunit C (Clostridium botulinum (strain Loch Maree / Type A3)).